A 43-amino-acid chain; its full sequence is Protein PsbN (43 aa).

A helical transmembrane segment spans residues 4-24 (ATIIVIFVSSLLLGITAYSIY).

It belongs to the PsbN family.

It localises to the plastid. The protein resides in the chloroplast thylakoid membrane. May play a role in photosystem I and II biogenesis. The protein is Protein PsbN of Trieres chinensis (Marine centric diatom).